A 261-amino-acid polypeptide reads, in one-letter code: Cytochrome c oxidase subunit 3 (261 aa).

Residues M1–P15 lie on the Mitochondrial matrix side of the membrane. A helical transmembrane segment spans residues W16–W34. The Mitochondrial intermembrane segment spans residues F35–T40. The chain crosses the membrane as a helical span at residues I41 to T66. The Mitochondrial matrix portion of the chain corresponds to F67–T72. Residues P73 to S105 traverse the membrane as a helical segment. Residues L106–E128 lie on the Mitochondrial intermembrane side of the membrane. The chain crosses the membrane as a helical span at residues V129–M152. Topologically, residues E153–N155 are mitochondrial matrix. The helical transmembrane segment at R156–E183 threads the bilayer. Residues A184–D190 lie on the Mitochondrial intermembrane side of the membrane. A helical membrane pass occupies residues G191–L223. The Mitochondrial matrix segment spans residues K224–H232. The chain crosses the membrane as a helical span at residues F233–I256. Topologically, residues Y257–S261 are mitochondrial intermembrane.

It belongs to the cytochrome c oxidase subunit 3 family. In terms of assembly, component of the cytochrome c oxidase (complex IV, CIV), a multisubunit enzyme composed of 14 subunits. The complex is composed of a catalytic core of 3 subunits MT-CO1, MT-CO2 and MT-CO3, encoded in the mitochondrial DNA, and 11 supernumerary subunits COX4I, COX5A, COX5B, COX6A, COX6B, COX6C, COX7A, COX7B, COX7C, COX8 and NDUFA4, which are encoded in the nuclear genome. The complex exists as a monomer or a dimer and forms supercomplexes (SCs) in the inner mitochondrial membrane with NADH-ubiquinone oxidoreductase (complex I, CI) and ubiquinol-cytochrome c oxidoreductase (cytochrome b-c1 complex, complex III, CIII), resulting in different assemblies (supercomplex SCI(1)III(2)IV(1) and megacomplex MCI(2)III(2)IV(2)).

The protein resides in the mitochondrion inner membrane. It catalyses the reaction 4 Fe(II)-[cytochrome c] + O2 + 8 H(+)(in) = 4 Fe(III)-[cytochrome c] + 2 H2O + 4 H(+)(out). Functionally, component of the cytochrome c oxidase, the last enzyme in the mitochondrial electron transport chain which drives oxidative phosphorylation. The respiratory chain contains 3 multisubunit complexes succinate dehydrogenase (complex II, CII), ubiquinol-cytochrome c oxidoreductase (cytochrome b-c1 complex, complex III, CIII) and cytochrome c oxidase (complex IV, CIV), that cooperate to transfer electrons derived from NADH and succinate to molecular oxygen, creating an electrochemical gradient over the inner membrane that drives transmembrane transport and the ATP synthase. Cytochrome c oxidase is the component of the respiratory chain that catalyzes the reduction of oxygen to water. Electrons originating from reduced cytochrome c in the intermembrane space (IMS) are transferred via the dinuclear copper A center (CU(A)) of subunit 2 and heme A of subunit 1 to the active site in subunit 1, a binuclear center (BNC) formed by heme A3 and copper B (CU(B)). The BNC reduces molecular oxygen to 2 water molecules using 4 electrons from cytochrome c in the IMS and 4 protons from the mitochondrial matrix. This Dugong dugon (Dugong) protein is Cytochrome c oxidase subunit 3 (MT-CO3).